We begin with the raw amino-acid sequence, 105 residues long: NADH-quinone oxidoreductase subunit K (105 aa).

A run of 3 helical transmembrane segments spans residues 7–27 (IGVN…MFAV), 34–54 (IVIL…FLTF), and 66–86 (FSLF…AIVI).

Belongs to the complex I subunit 4L family. NDH-1 is composed of 14 different subunits. Subunits NuoA, H, J, K, L, M, N constitute the membrane sector of the complex.

It is found in the cell inner membrane. The enzyme catalyses a quinone + NADH + 5 H(+)(in) = a quinol + NAD(+) + 4 H(+)(out). NDH-1 shuttles electrons from NADH, via FMN and iron-sulfur (Fe-S) centers, to quinones in the respiratory chain. The immediate electron acceptor for the enzyme in this species is believed to be a menaquinone. Couples the redox reaction to proton translocation (for every two electrons transferred, four hydrogen ions are translocated across the cytoplasmic membrane), and thus conserves the redox energy in a proton gradient. This Chlorobaculum parvum (strain DSM 263 / NCIMB 8327) (Chlorobium vibrioforme subsp. thiosulfatophilum) protein is NADH-quinone oxidoreductase subunit K.